Consider the following 1228-residue polypeptide: Myosin-1 (1228 aa).

Residues 1-27 (MAVTKRAGRRAQGGTQPAKGAQGVKKA) form a disordered region. The Myosin motor domain occupies 37 to 716 (VGVSDLTLLS…TLFALEHMRD (680 aa)). ATP is bound at residue 130-137 (GESGAGKT). Ser-358 carries the phosphoserine modification. Residues 405 to 487 (TIGILDIYGF…PGIFAALNDA (83 aa)) form an actin-binding region. 2 IQ domains span residues 720-740 (HNMA…KTEC) and 741-768 (AIKI…SGHK). The 187-residue stretch at 776–962 (RRTYSLIGYR…SGSVQVPPGA (187 aa)) folds into the TH1 domain. Disordered regions lie at residues 953 to 1040 (SGSV…AESA), 1053 to 1109 (QSLV…PAAP), and 1169 to 1228 (QGGA…DDDW). The span at 1053-1063 (QSLVNPRSGQG) shows a compositional bias: polar residues. Low complexity predominate over residues 1064–1092 (QQQQQHHQAYQQPTAAQPAATSYSPAPAK). Pro residues predominate over residues 1093–1106 (AAPPPPPPAPPAAP). Residues 1109–1170 (PAEPTYKALY…PAAYLEEVQG (62 aa)) form the SH3 domain. The span at 1180-1194 (PTAGGASAGASLAEA) shows a compositional bias: low complexity.

Belongs to the TRAFAC class myosin-kinesin ATPase superfamily. Myosin family. Phosphorylation of the TEDS site (Ser-358) is required for the polarization of the actin cytoskeleton. Phosphorylation probably activates the myosin-I ATPase activity.

The protein resides in the cytoplasm. Its subcellular location is the cytoskeleton. It is found in the actin patch. Its function is as follows. Type-I myosin implicated in the organization of the actin cytoskeleton. Required for proper actin cytoskeleton polarization. At the cell cortex, assembles in patch-like structures together with proteins from the actin-polymerizing machinery and promotes actin assembly. Functions as actin nucleation-promoting factor (NPF) for the Arp2/3 complex. The sequence is that of Myosin-1 (MYO1) from Yarrowia lipolytica (strain CLIB 122 / E 150) (Yeast).